The primary structure comprises 224 residues: Cytidylate kinase (224 aa).

Gly-9–Thr-17 provides a ligand contact to ATP.

It belongs to the cytidylate kinase family. Type 1 subfamily.

The protein resides in the cytoplasm. It carries out the reaction CMP + ATP = CDP + ADP. It catalyses the reaction dCMP + ATP = dCDP + ADP. This is Cytidylate kinase from Saccharophagus degradans (strain 2-40 / ATCC 43961 / DSM 17024).